The chain runs to 280 residues: Octanoyl-[GcvH]:protein N-octanoyltransferase (280 aa).

The BPL/LPL catalytic domain maps to 40-245; the sequence is QERGAVLRAW…VLSTVSLLQN (206 aa). Cys144 acts as the Acyl-thioester intermediate in catalysis.

This sequence belongs to the octanoyltransferase LipL family.

The enzyme catalyses N(6)-octanoyl-L-lysyl-[glycine-cleavage complex H protein] + L-lysyl-[lipoyl-carrier protein] = N(6)-octanoyl-L-lysyl-[lipoyl-carrier protein] + L-lysyl-[glycine-cleavage complex H protein]. The protein operates within protein modification; protein lipoylation via endogenous pathway; protein N(6)-(lipoyl)lysine from octanoyl-[acyl-carrier-protein]. Catalyzes the amidotransfer (transamidation) of the octanoyl moiety from octanoyl-GcvH to the lipoyl domain of the E2 subunit of lipoate-dependent enzymes. This is Octanoyl-[GcvH]:protein N-octanoyltransferase from Exiguobacterium sp. (strain ATCC BAA-1283 / AT1b).